A 101-amino-acid chain; its full sequence is UPF0235 protein MmarC7_0309 (101 aa).

The protein belongs to the UPF0235 family.

This Methanococcus maripaludis (strain C7 / ATCC BAA-1331) protein is UPF0235 protein MmarC7_0309.